A 196-amino-acid polypeptide reads, in one-letter code: Adenylate kinase (196 aa).

9-17 (GIPGVGKST) contributes to the ATP binding site.

This sequence belongs to the archaeal adenylate kinase family.

Its subcellular location is the cytoplasm. It catalyses the reaction AMP + ATP = 2 ADP. The chain is Adenylate kinase from Thermococcus sibiricus (strain DSM 12597 / MM 739).